The sequence spans 160 residues: 2-C-methyl-D-erythritol 2,4-cyclodiphosphate synthase (160 aa).

The a divalent metal cation site is built by Asp-9 and His-11. Residues 9-11 (DVH) and 35-36 (HS) each bind 4-CDP-2-C-methyl-D-erythritol 2-phosphate. His-43 contacts a divalent metal cation. 4-CDP-2-C-methyl-D-erythritol 2-phosphate contacts are provided by residues 57–59 (DIG), 62–66 (FPDTD), 101–107 (AEAPKMA), 133–136 (TTSE), Phe-140, and Arg-143.

The protein belongs to the IspF family. As to quaternary structure, homotrimer. The cofactor is a divalent metal cation.

It catalyses the reaction 4-CDP-2-C-methyl-D-erythritol 2-phosphate = 2-C-methyl-D-erythritol 2,4-cyclic diphosphate + CMP. It functions in the pathway isoprenoid biosynthesis; isopentenyl diphosphate biosynthesis via DXP pathway; isopentenyl diphosphate from 1-deoxy-D-xylulose 5-phosphate: step 4/6. Functionally, involved in the biosynthesis of isopentenyl diphosphate (IPP) and dimethylallyl diphosphate (DMAPP), two major building blocks of isoprenoid compounds. Catalyzes the conversion of 4-diphosphocytidyl-2-C-methyl-D-erythritol 2-phosphate (CDP-ME2P) to 2-C-methyl-D-erythritol 2,4-cyclodiphosphate (ME-CPP) with a corresponding release of cytidine 5-monophosphate (CMP). This is 2-C-methyl-D-erythritol 2,4-cyclodiphosphate synthase from Methylobacillus flagellatus (strain ATCC 51484 / DSM 6875 / VKM B-1610 / KT).